The sequence spans 495 residues: Glycerol kinase (495 aa).

T11 is a binding site for ADP. The ATP site is built by T11, T12, and S13. T11 serves as a coordination point for sn-glycerol 3-phosphate. Position 15 (R15) interacts with ADP. R81, E82, Y133, and D242 together coordinate sn-glycerol 3-phosphate. 5 residues coordinate glycerol: R81, E82, Y133, D242, and Q243. Residues T264 and G307 each coordinate ADP. T264, G307, Q311, and G408 together coordinate ATP. ADP contacts are provided by G408 and N412.

It belongs to the FGGY kinase family.

The catalysed reaction is glycerol + ATP = sn-glycerol 3-phosphate + ADP + H(+). It functions in the pathway polyol metabolism; glycerol degradation via glycerol kinase pathway; sn-glycerol 3-phosphate from glycerol: step 1/1. With respect to regulation, inhibited by fructose 1,6-bisphosphate (FBP). Functionally, key enzyme in the regulation of glycerol uptake and metabolism. Catalyzes the phosphorylation of glycerol to yield sn-glycerol 3-phosphate. This is Glycerol kinase from Rhodospirillum rubrum (strain ATCC 11170 / ATH 1.1.1 / DSM 467 / LMG 4362 / NCIMB 8255 / S1).